We begin with the raw amino-acid sequence, 90 residues long: MALDSAIKLEIISKFARGEKDTGSPEVQVALLSRRISDLTEHLKVNVKDHASRLGLLKLVAQRKHLLKYLKKTDYAKYSELISTLGIRDR.

The protein belongs to the universal ribosomal protein uS15 family. As to quaternary structure, part of the 30S ribosomal subunit. Forms a bridge to the 50S subunit in the 70S ribosome, contacting the 23S rRNA.

One of the primary rRNA binding proteins, it binds directly to 16S rRNA where it helps nucleate assembly of the platform of the 30S subunit by binding and bridging several RNA helices of the 16S rRNA. Its function is as follows. Forms an intersubunit bridge (bridge B4) with the 23S rRNA of the 50S subunit in the ribosome. This chain is Small ribosomal subunit protein uS15, found in Wolinella succinogenes (strain ATCC 29543 / DSM 1740 / CCUG 13145 / JCM 31913 / LMG 7466 / NCTC 11488 / FDC 602W) (Vibrio succinogenes).